The following is a 338-amino-acid chain: Beta-ketoacyl-[acyl-carrier-protein] synthase III (338 aa).

Active-site residues include C119 and H261. An ACP-binding region spans residues 262 to 266 (QANQR). N291 is an active-site residue.

This sequence belongs to the thiolase-like superfamily. FabH family. As to quaternary structure, homodimer.

It localises to the cytoplasm. The enzyme catalyses malonyl-[ACP] + acetyl-CoA + H(+) = 3-oxobutanoyl-[ACP] + CO2 + CoA. It functions in the pathway lipid metabolism; fatty acid biosynthesis. Functionally, catalyzes the condensation reaction of fatty acid synthesis by the addition to an acyl acceptor of two carbons from malonyl-ACP. Catalyzes the first condensation reaction which initiates fatty acid synthesis and may therefore play a role in governing the total rate of fatty acid production. Possesses both acetoacetyl-ACP synthase and acetyl transacylase activities. Its substrate specificity determines the biosynthesis of branched-chain and/or straight-chain of fatty acids. The polypeptide is Beta-ketoacyl-[acyl-carrier-protein] synthase III (Prochlorococcus marinus (strain NATL2A)).